A 449-amino-acid chain; its full sequence is MLNYTGLENKDVLVVGLAKSGYEAAKLLIKLGANVTVNDGKDLSQDPHAKDLEALGVKIVDGGHPLSLLDNEPIIVKNPGIPYTVSIIQEAYQRHLKILTEVELSYLISEAPIIAITGTNGKTTTSSLIGDMFKKSRLTGRLSGNIGYVASKVAQETSPNEYLITELSSFQLLGVEQYRPHIAIITNIYSAHLDYHETLENYQNAKKQIYKNQTENDYLICNYHQRHLIESENLKAKTLYFSTQQEVDGIYIKDGFIVYQGIRIINIDDLVLPGEHNLENILAAVLASILAGVPIKAIIDSLTTFSGIDHRLQYIGTNRTNKYYNDSKATNTLATQFALNSFKQPIVWLCGGLDRGNDFDELIPYMKNVRVMVVFGQTQEKFAKLGNSQGKLVVKATDIEDAVKKVQDVVEPNDVVLLSPACASWDQYKTFEERGERFIESFRAHLPSY.

118–124 (GTNGKTT) lines the ATP pocket.

It belongs to the MurCDEF family.

The protein resides in the cytoplasm. It catalyses the reaction UDP-N-acetyl-alpha-D-muramoyl-L-alanine + D-glutamate + ATP = UDP-N-acetyl-alpha-D-muramoyl-L-alanyl-D-glutamate + ADP + phosphate + H(+). It participates in cell wall biogenesis; peptidoglycan biosynthesis. Cell wall formation. Catalyzes the addition of glutamate to the nucleotide precursor UDP-N-acetylmuramoyl-L-alanine (UMA). This chain is UDP-N-acetylmuramoylalanine--D-glutamate ligase, found in Staphylococcus haemolyticus (strain JCSC1435).